The chain runs to 269 residues: Replication protein A 32 kDa subunit (269 aa).

Residues 1 to 22 show a composition bias toward polar residues; that stretch reads MSNRVQGGFDNNSGNNQSAQKQ. The tract at residues 1–25 is disordered; that stretch reads MSNRVQGGFDNNSGNNQSAQKQQAE. Positions 69 to 149 form a DNA-binding region, OB; it reads ITAKFEFLQS…AQIQLLYFSI (81 aa).

Belongs to the replication factor A protein 2 family. As to quaternary structure, component of the replication protein A complex (RPA), a heterotrimeric complex composed of RPA1, RPA2/TEB2 and RPA3/TEB3. Component of the telomerase holoenzyme complex, composed of the catalytic core (the catalytic subunit TERT, the telomerase RNA template component TER and TAP65/p65), which is associated with two heterotrimeric subcomplexes: (i) the replication protein A (RPA)-related subcomplex, composed of TEB1, RPA2/TEB2 and RPA3/TEB3 and (ii) the CST-like subcomplex, composed of TAP75/p75, TAP45/p45 and TAP19/p19. TEB1 and the CST-like subcomplex are tethered to the catalytic core by TAP50/p50.

It is found in the nucleus. The protein resides in the chromosome. The protein localises to the telomere. In terms of biological role, component of the heterotrimeric replication protein A (RPA) and holoenzyme telomerase ribonucleoprotein complexes. As part of the RPA complex, binds and stabilizes single-stranded DNA (ssDNA) intermediates, that form during DNA replication or upon DNA stress. It prevents their reannealing and in parallel, recruits and activates different proteins and complexes involved in DNA metabolism. Thereby, it plays an essential role both in DNA replication and the cellular response to DNA damage. In the cellular response to DNA damage, the RPA complex controls DNA repair and DNA damage checkpoint activation. Also part of a subcomplex of the holoenzyme telomerase ribonucleoprotein complex: this subcomplex that contains TEB1, RPA2/TEB2, RPA3/TEB3, but not RPA1, mediates the recruitment of telomerase to telomeric DNA via specific interaction between TEB1 and telomeric ssDNA. In the holoenzyme telomerase ribonucleoprotein complex, RPA2/TEB2 and RPA3/TEB3 act as assembly factors for TEB1 incorporation into telomerase holoenzyme. In the holoenzyme telomerase ribonucleoprotein complex, RPA2/TEB2 does not contribute to ssDNA affinity, while it contributes to ssDNA affinity in the RPA complex. This Tetrahymena thermophila (strain SB210) protein is Replication protein A 32 kDa subunit (RPA2).